The chain runs to 51 residues: Large ribosomal subunit protein bL33 (51 aa).

The protein belongs to the bacterial ribosomal protein bL33 family.

This is Large ribosomal subunit protein bL33 from Pseudoalteromonas atlantica (strain T6c / ATCC BAA-1087).